Reading from the N-terminus, the 568-residue chain is Urease subunit alpha (568 aa).

The 439-residue stretch at 130–568 (GGIDTHIHFI…LPMAQRYFLF (439 aa)) folds into the Urease domain. Ni(2+)-binding residues include His-135, His-137, and Lys-218. Lys-218 is modified (N6-carboxylysine). His-220 provides a ligand contact to substrate. Ni(2+) contacts are provided by His-247 and His-273. The active-site Proton donor is His-321. Asp-361 is a binding site for Ni(2+).

This sequence belongs to the metallo-dependent hydrolases superfamily. Urease alpha subunit family. Heterotrimer of UreA (gamma), UreB (beta) and UreC (alpha) subunits. Three heterotrimers associate to form the active enzyme. Ni cation serves as cofactor. Post-translationally, carboxylation allows a single lysine to coordinate two nickel ions.

It is found in the cytoplasm. It catalyses the reaction urea + 2 H2O + H(+) = hydrogencarbonate + 2 NH4(+). It participates in nitrogen metabolism; urea degradation; CO(2) and NH(3) from urea (urease route): step 1/1. This Burkholderia pseudomallei (strain K96243) protein is Urease subunit alpha.